The primary structure comprises 435 residues: MFFKLLKDAFKIKQVRSKILFTIFIILVFRIGTTITVPGINAKALSNLNDLPFLNMLSLVSGNAMRNFSVFALGVSPYITASIVVQLLQMDLLPKFVEWGKQGEVGRRKLNQATRYIALVLAFVQAIGITAGFDTLSRANLVANPNVQTYALICVLLATGSMIVTWLGEQITDKGYGNGVSMIIFAGIVSAIPDMIKGIYEDYFVNIPSERLTSSFIFVGILIVAVLLIIYFTTFVQQAEYKIPIQYTKVAKGAPSSSYLPLKVNPAGVIPVIFASSITAAPAAIFQVVSALGYDADWVKTAQSLLATTTISGMFMYAFLIVLFTFFYTFVQINPEKTAENLQKSGAYIPGVRPGKGTEDYMSKLLRRLATVGSLFLGFISILPILAKDVFGLTDAVALGGTSLLIIISTGIEGMKQLEGYLLKRKYVGFMDTSE.

Helical transmembrane passes span 19–39, 68–88, 116–136, 147–167, 179–199, 216–236, 269–289, 311–331, 372–392, and 395–415; these read ILFTIFIILVFRIGTTITVPG, FSVFALGVSPYITASIVVQLL, YIALVLAFVQAIGITAGFDTL, VQTYALICVLLATGSMIVTWL, GVSMIIFAGIVSAIPDMIKGI, FIFVGILIVAVLLIIYFTTFV, VIPVIFASSITAAPAAIFQVV, ISGMFMYAFLIVLFTFFYTFV, VGSLFLGFISILPILAKDVFG, and DAVALGGTSLLIIISTGIEGM.

It belongs to the SecY/SEC61-alpha family. Component of the Sec protein translocase complex. Heterotrimer consisting of SecY, SecE and SecG subunits. The heterotrimers can form oligomers, although 1 heterotrimer is thought to be able to translocate proteins. Interacts with the ribosome. Interacts with SecDF, and other proteins may be involved. Interacts with SecA.

The protein resides in the cell membrane. Functionally, the central subunit of the protein translocation channel SecYEG. Consists of two halves formed by TMs 1-5 and 6-10. These two domains form a lateral gate at the front which open onto the bilayer between TMs 2 and 7, and are clamped together by SecE at the back. The channel is closed by both a pore ring composed of hydrophobic SecY resides and a short helix (helix 2A) on the extracellular side of the membrane which forms a plug. The plug probably moves laterally to allow the channel to open. The ring and the pore may move independently. This chain is Protein translocase subunit SecY, found in Streptococcus sanguinis (strain SK36).